The primary structure comprises 660 residues: Bifunctional polymyxin resistance protein ArnA (660 aa).

Positions 1-304 are formyltransferase ArnAFT; sequence MKAVIFAYHD…TLGLVAGARL (304 aa). Catalysis depends on histidine 104, which acts as the Proton donor; for formyltransferase activity. (6R)-10-formyltetrahydrofolate contacts are provided by residues arginine 114 and 136–140; that span reads VKRAD. The interval 314–660 is dehydrogenase ArnADH; sequence RRIRVLILGV…RSVDVAERAS (347 aa). NAD(+)-binding positions include aspartate 347 and 368-369; that span reads DI. Residues alanine 393, tyrosine 398, and 432–433 each bind UDP-alpha-D-glucuronate; that span reads TS. Catalysis depends on glutamate 434, which acts as the Proton acceptor; for decarboxylase activity. Residues arginine 460, asparagine 492, 526–535, and tyrosine 613 contribute to the UDP-alpha-D-glucuronate site; that span reads KLIDGGQQKR. Arginine 619 (proton donor; for decarboxylase activity) is an active-site residue.

The protein in the N-terminal section; belongs to the Fmt family. UDP-L-Ara4N formyltransferase subfamily. It in the C-terminal section; belongs to the NAD(P)-dependent epimerase/dehydratase family. UDP-glucuronic acid decarboxylase subfamily. In terms of assembly, homohexamer, formed by a dimer of trimers.

It catalyses the reaction UDP-alpha-D-glucuronate + NAD(+) = UDP-beta-L-threo-pentopyranos-4-ulose + CO2 + NADH. It carries out the reaction UDP-4-amino-4-deoxy-beta-L-arabinose + (6R)-10-formyltetrahydrofolate = UDP-4-deoxy-4-formamido-beta-L-arabinose + (6S)-5,6,7,8-tetrahydrofolate + H(+). Its pathway is nucleotide-sugar biosynthesis; UDP-4-deoxy-4-formamido-beta-L-arabinose biosynthesis; UDP-4-deoxy-4-formamido-beta-L-arabinose from UDP-alpha-D-glucuronate: step 1/3. It participates in nucleotide-sugar biosynthesis; UDP-4-deoxy-4-formamido-beta-L-arabinose biosynthesis; UDP-4-deoxy-4-formamido-beta-L-arabinose from UDP-alpha-D-glucuronate: step 3/3. It functions in the pathway bacterial outer membrane biogenesis; lipopolysaccharide biosynthesis. Bifunctional enzyme that catalyzes the oxidative decarboxylation of UDP-glucuronic acid (UDP-GlcUA) to UDP-4-keto-arabinose (UDP-Ara4O) and the addition of a formyl group to UDP-4-amino-4-deoxy-L-arabinose (UDP-L-Ara4N) to form UDP-L-4-formamido-arabinose (UDP-L-Ara4FN). The modified arabinose is attached to lipid A and is required for resistance to polymyxin and cationic antimicrobial peptides. This Salmonella newport (strain SL254) protein is Bifunctional polymyxin resistance protein ArnA.